A 220-amino-acid chain; its full sequence is Ribosomal RNA large subunit methyltransferase E (220 aa).

The S-adenosyl-L-methionine site is built by Gly-60, Trp-62, Asp-92, Asp-108, and Asp-133. Lys-173 serves as the catalytic Proton acceptor. The disordered stretch occupies residues 195–220 (APRKPKASRDKSSETFILGRHLKQPR).

The protein belongs to the class I-like SAM-binding methyltransferase superfamily. RNA methyltransferase RlmE family.

It localises to the cytoplasm. The enzyme catalyses uridine(2552) in 23S rRNA + S-adenosyl-L-methionine = 2'-O-methyluridine(2552) in 23S rRNA + S-adenosyl-L-homocysteine + H(+). Functionally, specifically methylates the uridine in position 2552 of 23S rRNA at the 2'-O position of the ribose in the fully assembled 50S ribosomal subunit. This is Ribosomal RNA large subunit methyltransferase E from Burkholderia pseudomallei (strain 1710b).